The chain runs to 805 residues: Probable exo-1,4-beta-xylosidase xlnD (805 aa).

An N-terminal signal peptide occupies residues Met1–Gly17. 5 N-linked (GlcNAc...) asparagine glycosylation sites follow: Asn20, Asn115, Asn140, Asn235, and Asn244. The active site involves Asp308. N-linked (GlcNAc...) asparagine glycosylation is found at Asn350, Asn383, Asn405, Asn434, Asn445, Asn486, Asn490, Asn622, Asn653, Asn667, Asn689, and Asn711.

The protein belongs to the glycosyl hydrolase 3 family.

The protein resides in the secreted. The enzyme catalyses Hydrolysis of (1-&gt;4)-beta-D-xylans, to remove successive D-xylose residues from the non-reducing termini.. The protein operates within glycan degradation; xylan degradation. Its function is as follows. Xylan 1,4-beta-xylosidase involved in the hydrolysis of xylan, a major structural heterogeneous polysaccharide found in plant biomass representing the second most abundant polysaccharide in the biosphere, after cellulose. The polypeptide is Probable exo-1,4-beta-xylosidase xlnD (xlnD) (Aspergillus aculeatus).